We begin with the raw amino-acid sequence, 339 residues long: MAGRVKIKQKELIDSTVKNKNVMNLFHEIIGSKGNINFSVVWPKFKKIKQSVYDYISTLSVLEKASVMQNFEDDKKLLELFVQKLWAAYEGYFKYPEIEKYEVEGQVNFNLVPQYVLEKFSQLYRIRINSELVTLILNSCAFMSKYNDYILKKDPYILTITPGLCFSPIPNFEDLNFKHLYNSDKNSQHDKDFIMFILYKLYTAALGVYNAISIPDIDVEDLENIILSSVSQIKKQIPRCKDAFNKIESSVHLLRKNFNTYYSDYVGSGYNPTIIMEQYIKDISQDSKNISPRISYQFRTIIKYYRDMIATKHQTMDPQVLNLVKHVEKKLDMLDREKN.

This sequence belongs to the asfivirus H339R family. Interacts with host NACA (alpha chain of nascent polypeptide-associated complex).

Its subcellular location is the host cytoplasm. The protein resides in the host nucleus. This chain is Protein H339R, found in African swine fever virus (isolate Tick/South Africa/Pretoriuskop Pr4/1996) (ASFV).